The chain runs to 507 residues: ATP synthase subunit alpha, chloroplastic (507 aa).

Residue 170 to 177 (GDRQTGKT) coordinates ATP.

Belongs to the ATPase alpha/beta chains family. F-type ATPases have 2 components, CF(1) - the catalytic core - and CF(0) - the membrane proton channel. CF(1) has five subunits: alpha(3), beta(3), gamma(1), delta(1), epsilon(1). CF(0) has four main subunits: a, b, b' and c.

The protein resides in the plastid. It is found in the chloroplast thylakoid membrane. The enzyme catalyses ATP + H2O + 4 H(+)(in) = ADP + phosphate + 5 H(+)(out). Functionally, produces ATP from ADP in the presence of a proton gradient across the membrane. The alpha chain is a regulatory subunit. The sequence is that of ATP synthase subunit alpha, chloroplastic from Liriodendron tulipifera (Tuliptree).